The following is a 142-amino-acid chain: Endoribonuclease YbeY (142 aa).

Residues His107, His111, and Asp117 each contribute to the Zn(2+) site.

Belongs to the endoribonuclease YbeY family. It depends on Zn(2+) as a cofactor.

Its subcellular location is the cytoplasm. Single strand-specific metallo-endoribonuclease involved in late-stage 70S ribosome quality control and in maturation of the 3' terminus of the 16S rRNA. This is Endoribonuclease YbeY from Chlorobium phaeobacteroides (strain DSM 266 / SMG 266 / 2430).